The chain runs to 154 residues: MKAIVQVRGEVNQEQGVRDTLEMLNLDRVNHATLVPETDAYDGMVTKVNDWVAHGEPSADVVATLIERRAEPAAGEGDIDDEWVADNTDYDGVEALAEALVDEETTLQEAGVSPTLRLHPPRGGHDGIKHPTKEGGQLGKHTTEEIDTLLEAMR.

The disordered stretch occupies residues 114–139 (PTLRLHPPRGGHDGIKHPTKEGGQLG). Residues 123–133 (GGHDGIKHPTK) are compositionally biased toward basic and acidic residues.

It belongs to the universal ribosomal protein uL30 family. As to quaternary structure, part of the 50S ribosomal subunit.

This Natronomonas pharaonis (strain ATCC 35678 / DSM 2160 / CIP 103997 / JCM 8858 / NBRC 14720 / NCIMB 2260 / Gabara) (Halobacterium pharaonis) protein is Large ribosomal subunit protein uL30.